The chain runs to 502 residues: Mannitol 2-dehydrogenase (502 aa).

Position 37–48 (37–48) interacts with NAD(+); sequence IVHIGVGGFHRA.

This sequence belongs to the mannitol dehydrogenase family. Monomer.

It catalyses the reaction D-mannitol + NAD(+) = D-fructose + NADH + H(+). In terms of biological role, catalyzes the NAD(H)-dependent interconversion of D-fructose and D-mannitol in the mannitol metabolic pathway. The polypeptide is Mannitol 2-dehydrogenase (Aspergillus fumigatus (strain CBS 144.89 / FGSC A1163 / CEA10) (Neosartorya fumigata)).